Reading from the N-terminus, the 129-residue chain is M-zodatoxin-Lt8g (129 aa).

Positions 1-20 (MKYFVVALALVAAFACIAES) are cleaved as a signal peptide. Residues 21–60 (KPAESEHELAEVEEENELADLEDAVWLEHLADLSDLEEAR) constitute a propeptide that is removed on maturation. The Processing quadruplet motif motif lies at 57–60 (EEAR).

In terms of processing, cleavage of the propeptide depends on the processing quadruplet motif (XXXR, with at least one of X being E). Expressed by the venom gland.

It is found in the secreted. Its function is as follows. Insecticidal, cytolytic and antimicrobial peptide. Has insecticidal activity against the flesh fly S.carnaria. Has antibacterial activity against the Gram-negative bacteria E.coli. Forms voltage-dependent, ion-permeable channels in membranes. At high concentration causes cell membrane lysis. This Lachesana tarabaevi (Spider) protein is M-zodatoxin-Lt8g (cit 1-8).